Here is a 320-residue protein sequence, read N- to C-terminus: Cytochrome f (320 aa).

An N-terminal signal peptide occupies residues 1 to 35; sequence MQNRNTFSWVKEQMTRFISVSIMIYVITRTSISNA. Heme is bound by residues tyrosine 36, cysteine 56, cysteine 59, and histidine 60. The helical transmembrane segment at 286–306 threads the bilayer; the sequence is VQGLLFFLASVILAQIFLVLK.

This sequence belongs to the cytochrome f family. The 4 large subunits of the cytochrome b6-f complex are cytochrome b6, subunit IV (17 kDa polypeptide, petD), cytochrome f and the Rieske protein, while the 4 small subunits are PetG, PetL, PetM and PetN. The complex functions as a dimer. Heme is required as a cofactor.

The protein resides in the plastid. It localises to the chloroplast thylakoid membrane. In terms of biological role, component of the cytochrome b6-f complex, which mediates electron transfer between photosystem II (PSII) and photosystem I (PSI), cyclic electron flow around PSI, and state transitions. This is Cytochrome f from Drimys granadensis.